Reading from the N-terminus, the 1683-residue chain is Genome polyprotein (1683 aa).

Residues 1–445 (MRCIGISNRD…LHQVFGAIYG (445 aa)) are Extracellular-facing. 4 disulfides stabilise this stretch: Cys-3–Cys-30, Cys-60–Cys-121, Cys-74–Cys-105, and Cys-92–Cys-116. The N-linked (GlcNAc...) asparagine; by host glycan is linked to Asn-67. Positions 98–111 (DRGWGNGCGLFGKG) are fusion peptide. N-linked (GlcNAc...) asparagine; by host glycosylation is present at Asn-153. 2 disulfide bridges follow: Cys-185/Cys-285 and Cys-302/Cys-333. Residues 446-466 (AAFSGVSWTMKILIGVIITWI) traverse the membrane as a helical segment. Topologically, residues 467 to 472 (GMNSRS) are cytoplasmic. The helical transmembrane segment at 473 to 493 (TSLSVSLVLVGIVTLYLGVMV) threads the bilayer. Over 494–915 (QADSGCVVSW…MVGATMTDDI (422 aa)) the chain is Extracellular. Intrachain disulfides connect Cys-499/Cys-510, Cys-550/Cys-638, Cys-674/Cys-718, Cys-775/Cys-824, Cys-786/Cys-808, and Cys-807/Cys-811. N-linked (GlcNAc...) asparagine; by host glycosylation occurs at Asn-702. The chain crosses the membrane as a helical span at residues 916 to 940 (GMGVTYLALLAAFRVRPTFAAGLLL). Residues 941–946 (RKLTSK) lie on the Cytoplasmic side of the membrane. The helical transmembrane segment at 947–965 (ELMMTTIGIVLLSQSSIPE) threads the bilayer. At 966–989 (TILELTDALALGMMVLKMVRNMEK) the chain is on the lumenal side. The helical transmembrane segment at 990-1010 (YQLAVTIMAILCVPNAVILQN) threads the bilayer. Ala-1011 is a topological domain (cytoplasmic). Residues 1012-1030 (WKVSCTILAVVSVSPLLLT) traverse the membrane as a helical segment. At 1031 to 1037 (SSQQKAD) the chain is on the lumenal side. A helical membrane pass occupies residues 1038-1058 (WIPLALTIKGLNPTAIFLTTL). Topologically, residues 1059-1683 (SRTSKKRAGV…EFKEFAAGRK (625 aa)) are cytoplasmic. Residues 1066 to 1243 (AGVLWDVPSP…EKSIEDNPEI (178 aa)) form the Peptidase S7 domain. Catalysis depends on charge relay system; for serine protease NS3 activity residues His-1116, Asp-1140, and Ser-1200. In terms of domain architecture, Helicase ATP-binding spans 1245–1401 (DDIFRKRRLT…QSNAPIMDEE (157 aa)). Residues 1249-1252 (RKRR) form an important for RNA-binding region. 1258–1265 (LHPGAGKT) is a binding site for ATP. Positions 1349 to 1352 (DEAH) match the DEAH box motif. Residues 1411 to 1582 (SGHEWVTDFK…IFEPEREKVD (172 aa)) form the Helicase C-terminal domain.

Capsid protein C: Homodimer. Interacts (via N-terminus) with host EXOC1 (via C-terminus); this interaction results in EXOC1 degradation through the proteasome degradation pathway. Protein prM: Forms heterodimers with envelope protein E in the endoplasmic reticulum and Golgi. In terms of assembly, homodimer; in the endoplasmic reticulum and Golgi. Interacts with protein prM. Interacts with non-structural protein 1. As to quaternary structure, homodimer; Homohexamer when secreted. Interacts with envelope protein E. Interacts (via N-terminus) with serine protease NS3. Non-structural protein 2B: Forms a heterodimer with serine protease NS3. May form homooligomers. In terms of assembly, forms a heterodimer with NS2B. Interacts with NS4B. Interacts with unphosphorylated RNA-directed RNA polymerase NS5; this interaction stimulates RNA-directed RNA polymerase NS5 guanylyltransferase activity. Interacts with host SHFL. In terms of processing, specific enzymatic cleavages in vivo yield mature proteins. Cleavages in the lumen of endoplasmic reticulum are performed by host signal peptidase, wereas cleavages in the cytoplasmic side are performed by the Serine protease NS3. Signal cleavage at the 2K-4B site requires a prior NS3 protease-mediated cleavage at the 4A-2K site. Post-translationally, N-glycosylated. The excreted form is glycosylated and this is required for efficient secretion of the protein from infected cells. N-glycosylated. In terms of processing, specific enzymatic cleavages in vivo yield mature proteins. Cleavages in the lumen of endoplasmic reticulum are performed by host signal peptidase, wereas cleavages in the cytoplasmic side are performed by serine protease NS3. Signal cleavage at the 2K-4B site requires a prior NS3 protease-mediated cleavage at the 4A-2K site.

It is found in the virion membrane. Its subcellular location is the host endoplasmic reticulum membrane. It localises to the secreted. The enzyme catalyses Selective hydrolysis of -Xaa-Xaa-|-Yaa- bonds in which each of the Xaa can be either Arg or Lys and Yaa can be either Ser or Ala.. The catalysed reaction is a ribonucleoside 5'-triphosphate + H2O = a ribonucleoside 5'-diphosphate + phosphate + H(+). It catalyses the reaction ATP + H2O = ADP + phosphate + H(+). In terms of biological role, binds to host cell surface receptor and mediates fusion between viral and cellular membranes. Envelope protein is synthesized in the endoplasmic reticulum in the form of heterodimer with protein prM. They play a role in virion budding in the ER, and the newly formed immature particle is covered with 60 spikes composed of heterodimer between precursor prM and envelope protein E. The virion is transported to the Golgi apparatus where the low pH causes dissociation of PrM-E heterodimers and formation of E homodimers. prM-E cleavage is inefficient, and many virions are only partially matured. These uncleaved prM would play a role in immune evasion. Its function is as follows. Involved in immune evasion, pathogenesis and viral replication. Once cleaved off the polyprotein, is targeted to three destinations: the viral replication cycle, the plasma membrane and the extracellular compartment. Essential for viral replication. Required for formation of the replication complex and recruitment of other non-structural proteins to the ER-derived membrane structures. Excreted as a hexameric lipoparticle that plays a role against host immune response. Antagonizing the complement function. Binds to the host macrophages and dendritic cells. Inhibits signal transduction originating from Toll-like receptor 3 (TLR3). Functionally, disrupts the host endothelial glycocalyx layer of host pulmonary microvascular endothelial cells, inducing degradation of sialic acid and shedding of heparan sulfate proteoglycans. NS1 induces expression of sialidases, heparanase, and activates cathepsin L, which activates heparanase via enzymatic cleavage. These effects are probably linked to the endothelial hyperpermeability observed in severe dengue disease. Component of the viral RNA replication complex that functions in virion assembly and antagonizes the host immune response. In terms of biological role, serine protease subunit NS2B: Required cofactor for the serine protease function of NS3. May have membrane-destabilizing activity and form viroporins. Its function is as follows. Displays three enzymatic activities: serine protease, NTPase and RNA helicase. NS3 serine protease, in association with NS2B, performs its autocleavage and cleaves the polyprotein at dibasic sites in the cytoplasm: C-prM, NS2A-NS2B, NS2B-NS3, NS3-NS4A, NS4A-2K and NS4B-NS5. NS3 RNA helicase binds RNA and unwinds dsRNA in the 3' to 5' direction. In Aedimorphus (Red guenon), this protein is Genome polyprotein.